A 139-amino-acid polypeptide reads, in one-letter code: Endoribonuclease YbeY (139 aa).

Residues His107, His111, and Asp117 each contribute to the Zn(2+) site.

The protein belongs to the endoribonuclease YbeY family. Zn(2+) serves as cofactor.

It localises to the cytoplasm. In terms of biological role, single strand-specific metallo-endoribonuclease involved in late-stage 70S ribosome quality control and in maturation of the 3' terminus of the 16S rRNA. In Azobacteroides pseudotrichonymphae genomovar. CFP2, this protein is Endoribonuclease YbeY.